A 457-amino-acid polypeptide reads, in one-letter code: tRNA modification GTPase MnmE (457 aa).

(6S)-5-formyl-5,6,7,8-tetrahydrofolate is bound by residues R25, E87, and R126. Residues 223 to 377 (GISTAIIGRP…IEERINQLFF (155 aa)) enclose the TrmE-type G domain. Residue N233 coordinates K(+). GTP contacts are provided by residues 233–238 (NVGKSS), 252–258 (TDIAGTT), and 277–280 (DTAG). Residue S237 participates in Mg(2+) binding. Residues T252, I254, and T257 each contribute to the K(+) site. Mg(2+) is bound at residue T258. K457 contributes to the (6S)-5-formyl-5,6,7,8-tetrahydrofolate binding site.

This sequence belongs to the TRAFAC class TrmE-Era-EngA-EngB-Septin-like GTPase superfamily. TrmE GTPase family. As to quaternary structure, homodimer. Heterotetramer of two MnmE and two MnmG subunits. It depends on K(+) as a cofactor.

The protein localises to the cytoplasm. Functionally, exhibits a very high intrinsic GTPase hydrolysis rate. Involved in the addition of a carboxymethylaminomethyl (cmnm) group at the wobble position (U34) of certain tRNAs, forming tRNA-cmnm(5)s(2)U34. The sequence is that of tRNA modification GTPase MnmE from Streptococcus gordonii (strain Challis / ATCC 35105 / BCRC 15272 / CH1 / DL1 / V288).